We begin with the raw amino-acid sequence, 623 residues long: DNA-directed RNA polymerase subunit gamma (623 aa).

Zn(2+) contacts are provided by cysteine 70, cysteine 72, cysteine 85, and cysteine 88. Positions 466, 468, and 470 each coordinate Mg(2+).

The protein belongs to the RNA polymerase beta' chain family. RpoC1 subfamily. In terms of assembly, in cyanobacteria the RNAP catalytic core is composed of 2 alpha, 1 beta, 1 beta', 1 gamma and 1 omega subunit. When a sigma factor is associated with the core the holoenzyme is formed, which can initiate transcription. Mg(2+) is required as a cofactor. Requires Zn(2+) as cofactor.

It catalyses the reaction RNA(n) + a ribonucleoside 5'-triphosphate = RNA(n+1) + diphosphate. In terms of biological role, DNA-dependent RNA polymerase catalyzes the transcription of DNA into RNA using the four ribonucleoside triphosphates as substrates. The protein is DNA-directed RNA polymerase subunit gamma of Acaryochloris marina (strain MBIC 11017).